The chain runs to 105 residues: Fungal protease inhibitor-1 (105 aa).

An N-terminal signal peptide occupies residues 1–19; the sequence is MKAVITLLFLACILVVTYG. 6 disulfides stabilise this stretch: Cys-23/Cys-56, Cys-28/Cys-58, Cys-33/Cys-59, Cys-42/Cys-62, Cys-72/Cys-93, and Cys-87/Cys-98.

Inhibits proteases from the fungi A.oryzae and R.oryzae, trypsin and chymotrypsin. Does not inhibit protease from the bacterium B.licheniformis or papain. This Antheraea mylitta (Tasar silkworm) protein is Fungal protease inhibitor-1.